The primary structure comprises 223 residues: Ribose-5-phosphate isomerase A (223 aa).

Substrate is bound by residues 32 to 35 (TGST), 85 to 88 (DGAD), and 98 to 101 (KGGG). E107 functions as the Proton acceptor in the catalytic mechanism. K125 serves as a coordination point for substrate.

This sequence belongs to the ribose 5-phosphate isomerase family. In terms of assembly, homodimer.

It carries out the reaction aldehydo-D-ribose 5-phosphate = D-ribulose 5-phosphate. The protein operates within carbohydrate degradation; pentose phosphate pathway; D-ribose 5-phosphate from D-ribulose 5-phosphate (non-oxidative stage): step 1/1. Catalyzes the reversible conversion of ribose-5-phosphate to ribulose 5-phosphate. This Pseudomonas paraeruginosa (strain DSM 24068 / PA7) (Pseudomonas aeruginosa (strain PA7)) protein is Ribose-5-phosphate isomerase A.